The following is a 513-amino-acid chain: ATP synthase subunit alpha (513 aa).

Residue 169–176 coordinates ATP; it reads GDRQTGKT.

It belongs to the ATPase alpha/beta chains family. F-type ATPases have 2 components, CF(1) - the catalytic core - and CF(0) - the membrane proton channel. CF(1) has five subunits: alpha(3), beta(3), gamma(1), delta(1), epsilon(1). CF(0) has three main subunits: a(1), b(2) and c(9-12). The alpha and beta chains form an alternating ring which encloses part of the gamma chain. CF(1) is attached to CF(0) by a central stalk formed by the gamma and epsilon chains, while a peripheral stalk is formed by the delta and b chains.

Its subcellular location is the cell inner membrane. It catalyses the reaction ATP + H2O + 4 H(+)(in) = ADP + phosphate + 5 H(+)(out). Its function is as follows. Produces ATP from ADP in the presence of a proton gradient across the membrane. The alpha chain is a regulatory subunit. The protein is ATP synthase subunit alpha of Ruthia magnifica subsp. Calyptogena magnifica.